The following is a 354-amino-acid chain: Thiamine thiazole synthase (354 aa).

Residues Ala-83, 104–105, Gly-112, and Val-177 each bind substrate; that span reads EA. Cys-210 carries the 2,3-didehydroalanine (Cys) modification. Residues Asp-212, His-227, Met-305, and 315-317 each bind substrate; that span reads RMG.

It belongs to the THI4 family. In terms of assembly, homooctamer. Fe cation serves as cofactor. Post-translationally, during the catalytic reaction, a sulfide is transferred from Cys-210 to a reaction intermediate, generating a dehydroalanine residue.

The protein resides in the cytoplasm. It localises to the nucleus. It carries out the reaction [ADP-thiazole synthase]-L-cysteine + glycine + NAD(+) = [ADP-thiazole synthase]-dehydroalanine + ADP-5-ethyl-4-methylthiazole-2-carboxylate + nicotinamide + 3 H2O + 2 H(+). Its function is as follows. Involved in biosynthesis of the thiamine precursor thiazole. Catalyzes the conversion of NAD and glycine to adenosine diphosphate 5-(2-hydroxyethyl)-4-methylthiazole-2-carboxylic acid (ADT), an adenylated thiazole intermediate. The reaction includes an iron-dependent sulfide transfer from a conserved cysteine residue of the protein to a thiazole intermediate. The enzyme can only undergo a single turnover, which suggests it is a suicide enzyme. May have additional roles in adaptation to various stress conditions and in DNA damage tolerance. This Candida albicans (strain SC5314 / ATCC MYA-2876) (Yeast) protein is Thiamine thiazole synthase.